We begin with the raw amino-acid sequence, 460 residues long: Elongation factor 1-alpha (460 aa).

N,N,N-trimethylglycine is present on Gly-2. Residue Lys-3 is modified to N6,N6-dimethyllysine; alternate. N6-methyllysine; alternate is present on Lys-3. Positions 6–241 (KAHINVVVIG…DAIEQPKRPT (236 aa)) constitute a tr-type G domain. The interval 15–22 (GHVDSGKS) is G1. GTP is bound at residue 15 to 22 (GHVDSGKS). Lys-31 carries the N6-methyllysine modification. Residues 71–75 (GITID) form a G2 region. N6,N6,N6-trimethyllysine is present on Lys-80. The tract at residues 92–95 (DAPG) is G3. GTP contacts are provided by residues 92-96 (DAPGH) and 154-157 (NKMD). The segment at 154–157 (NKMD) is G4. A G5 region spans residues 193–195 (SGF). Lys-317 is subject to N6,N6-dimethyllysine; alternate. The residue at position 317 (Lys-317) is an N6-methyllysine; alternate. An N6-methyllysine modification is found at Lys-391.

This sequence belongs to the TRAFAC class translation factor GTPase superfamily. Classic translation factor GTPase family. EF-Tu/EF-1A subfamily.

It is found in the cytoplasm. Its function is as follows. This protein promotes the GTP-dependent binding of aminoacyl-tRNA to the A-site of ribosomes during protein biosynthesis. This is Elongation factor 1-alpha (TEF) from Sordaria macrospora.